Here is a 392-residue protein sequence, read N- to C-terminus: Chalcone synthase 1 (392 aa).

Residue cysteine 167 is part of the active site.

It belongs to the thiolase-like superfamily. Chalcone/stilbene synthases family.

The catalysed reaction is (E)-4-coumaroyl-CoA + 3 malonyl-CoA + 3 H(+) = 2',4,4',6'-tetrahydroxychalcone + 3 CO2 + 4 CoA. It functions in the pathway secondary metabolite biosynthesis; flavonoid biosynthesis. In terms of biological role, the primary product of this enzyme is 4,2',4',6'-tetrahydroxychalcone (also termed naringenin-chalcone or chalcone) which can under specific conditions spontaneously isomerize into naringenin. The protein is Chalcone synthase 1 (CHS1) of Secale cereale (Rye).